A 208-amino-acid polypeptide reads, in one-letter code: Large ribosomal subunit protein uL4 (208 aa).

The segment at Ala-47–Gly-84 is disordered. A compositionally biased stretch (basic and acidic residues) spans Ala-49 to Arg-58.

This sequence belongs to the universal ribosomal protein uL4 family. Part of the 50S ribosomal subunit.

One of the primary rRNA binding proteins, this protein initially binds near the 5'-end of the 23S rRNA. It is important during the early stages of 50S assembly. It makes multiple contacts with different domains of the 23S rRNA in the assembled 50S subunit and ribosome. Its function is as follows. Forms part of the polypeptide exit tunnel. The sequence is that of Large ribosomal subunit protein uL4 from Rhizorhabdus wittichii (strain DSM 6014 / CCUG 31198 / JCM 15750 / NBRC 105917 / EY 4224 / RW1) (Sphingomonas wittichii).